Here is a 682-residue protein sequence, read N- to C-terminus: 1,4-alpha-glucan-branching enzyme (682 aa).

(1,4-alpha-D-glucosyl)n-binding residues include tryptophan 88 and lysine 124. Aspartate 342 (nucleophile) is an active-site residue. Glutamate 397 functions as the Proton donor in the catalytic mechanism.

The protein belongs to the glycosyl hydrolase 13 family. GlgB subfamily.

The protein localises to the cytoplasm. The enzyme catalyses Transfers a segment of a (1-&gt;4)-alpha-D-glucan chain to a primary hydroxy group in a similar glucan chain.. It functions in the pathway glycan biosynthesis; glycogen biosynthesis. Functionally, glycogen-branching enzyme participates in the glycogen biosynthetic process along with glycogenin and glycogen synthase. Generates alpha-1,6-glucosidic branches from alpha-1,4-linked glucose chains, to increase solubility of the glycogen polymer. This chain is 1,4-alpha-glucan-branching enzyme (GLC3), found in Cryptococcus neoformans var. neoformans serotype D (strain B-3501A) (Filobasidiella neoformans).